Reading from the N-terminus, the 258-residue chain is MKQYIVLACMCLAAAAMPASLQQSSSSSSSCTEEENKHHMGIDVIIKVTKQDQTPTNDKICQSVTEITESESDPDPEVESEDDSTSVEDVDPPTTYYSIIGGGLRMNFGFTKCPQIKSISESADGNTVNARLSSVSPGQGKDSPAITREEALAMIKDCEVSIDIRCSEEEKDSDIKTHPVLGSNISHKKVSYEDIIGSTIVDTKCVKNLEFSVRIGDMCKESSELEVKDGFKYVDGSASEGATDDTSLIDSTKLKACV.

A signal peptide spans 1 to 17; sequence MKQYIVLACMCLAAAAM. The disordered stretch occupies residues 65–93; sequence TEITESESDPDPEVESEDDSTSVEDVDPP. Over residues 68 to 91 the composition is skewed to acidic residues; that stretch reads TESESDPDPEVESEDDSTSVEDVD.

This sequence belongs to the orthopoxvirus OPG001 family. As to quaternary structure, binds to host CC chemokines, such as RANTES/CCL5, MIP-1alpha/CCL3, MCP-1/CCL2 and eotaxin.

It is found in the secreted. Functionally, inhibits host immune defense by binding to host chemokines. Binds host CC chemokines (beta chemokines) such as RANTES with high affinity, but not CXC or C chemokines (alpha and gamma chemokines). This Homo sapiens (Human) protein is Chemokine-binding protein (OPG001).